A 24-amino-acid polypeptide reads, in one-letter code: AVITGACERDVQCGGGTCCAVSLI.

Residues Cys7 and Cys19 are joined by a disulfide bond.

As to expression, expressed by the skin glands.

It localises to the secreted. In terms of biological role, stimulates insulin secretion by BRIN-BD11 cells in vitro. The polypeptide is Prokineticin 1-like protein (Pelophylax saharicus (Sahara frog)).